Consider the following 1072-residue polypeptide: Translation initiation factor IF-2 (1072 aa).

Disordered regions lie at residues 55–369 and 426–452; these read ILDK…TGTA and ELVD…VSKQ. Low complexity-rich tracts occupy residues 91 to 100, 108 to 118, 126 to 179, and 186 to 212; these read AEASQAAEPA, EPATFAAEEPV, APRA…AEVA, and EAPQ…PSVQ. Residues 218–230 show a composition bias toward pro residues; the sequence is PQPPPRSPVPPAV. The segment covering 231 to 245 has biased composition (low complexity); the sequence is RTPSSTSSSATVVSR. Residues 253–307 show a composition bias toward gly residues; sequence QRGGPGGGRPGGPGGPGGRPGGPGGPGGRPGGPGGPGGRPGGPGGPGGRPGGPGG. The segment covering 426-436 has biased composition (basic and acidic residues); sequence ELVDVSKNKER. The tr-type G domain maps to 570–737; the sequence is PRPPVVAIMG…NLALQAEVLE (168 aa). The tract at residues 579-586 is G1; it reads GHVDHGKT. GTP is bound at residue 579 to 586; the sequence is GHVDHGKT. Residues 604–608 are G2; it reads GITQH. The tract at residues 625–628 is G3; the sequence is DTPG. GTP is bound by residues 625-629 and 679-682; these read DTPGH and NKMD. The interval 679–682 is G4; it reads NKMD. The tract at residues 715–717 is G5; it reads SAK.

The protein belongs to the TRAFAC class translation factor GTPase superfamily. Classic translation factor GTPase family. IF-2 subfamily.

It is found in the cytoplasm. Functionally, one of the essential components for the initiation of protein synthesis. Protects formylmethionyl-tRNA from spontaneous hydrolysis and promotes its binding to the 30S ribosomal subunits. Also involved in the hydrolysis of GTP during the formation of the 70S ribosomal complex. In Myxococcus xanthus (strain DK1622), this protein is Translation initiation factor IF-2.